Reading from the N-terminus, the 77-residue chain is Conotoxin Vc6.14 (77 aa).

A signal peptide spans 1 to 19; sequence MEKLTILLLVAAVLMSTQA. Residues 20–37 constitute a propeptide that is removed on maturation; it reads MFQGGGEKRPKDKIKFLS. 3 cysteine pairs are disulfide-bonded: Cys51–Cys65, Cys58–Cys69, and Cys64–Cys74.

The protein belongs to the conotoxin O2 superfamily. In terms of tissue distribution, expressed by the venom duct.

Its subcellular location is the secreted. Its function is as follows. Inhibits voltage-gated ion channels. The polypeptide is Conotoxin Vc6.14 (Conus victoriae (Queen Victoria cone)).